The chain runs to 458 residues: IPDDVGYRNQKTASKEGVCVVSKCQDGPNTLPRAKRANSFLEELRPSSLERECVEEVCDLEEAKEIFQSVDDTLAFWYKYVDGDQCAALPSEHPCSSQCCGHGTCADSIGGFSCQCHGGWEGSFCQYEVRFSNCSVDNGGCAHYCLEEEAGRSCSCAPGYELADDHLQCEPAVRFPCGRLGWKRIEKKRGNVKRDLEQVDEMDEVDPRLIDGKLTRRGDSPWQVILLDSKKKLACGAVLIHVSWVLTAAHCMEEPKKLFVRLGEYDLRRKERWELDLNIQEVLIHPNYSRSTTDNDIALLRLAQPATLSQTIVPICLPDNGLAERELMQAGQETVVTGWGYHSSREKEAKRNRTFILNFITVPVAPQNECEQVMSNIISENMLCAGILGDRRDACDGDSGGPMVASFRGTWFLVGLVSWGEGCGDLNNYGVYTKVSRYLDWIHSHIEEKEAAPESPAP.

The N-terminal stretch at 1 to 27 (IPDDVGYRNQKTASKEGVCVVSKCQDG) is a signal peptide. Residues 28–36 (PNTLPRAKR) constitute a propeptide that is removed on maturation. One can recognise a Gla domain in the interval 37 to 82 (ANSFLEELRPSSLERECVEEVCDLEEAKEIFQSVDDTLAFWYKYVD). 4-carboxyglutamate occurs at positions 42, 43, 50, 52, 55, 56, 61, 62, and 65. Cys-53 and Cys-58 form a disulfide bridge. Disulfide bonds link Cys-86/Cys-105, Cys-95/Cys-100, Cys-99/Cys-114, and Cys-116/Cys-125. 2 consecutive EGF-like domains span residues 91-126 (SEHPCSSQCCGHGTCADSIGGFSCQCHGGWEGSFCQ) and 130-170 (RFSN…LQCE). Asp-107 carries the post-translational modification (3R)-3-hydroxyaspartate. Asn-133 carries an N-linked (GlcNAc...) asparagine glycan. Cystine bridges form between Cys-134–Cys-145, Cys-141–Cys-154, Cys-156–Cys-169, Cys-177–Cys-316, and Cys-235–Cys-251. A Peptidase S1 domain is found at 210–447 (IDGKLTRRGD…YLDWIHSHIE (238 aa)). His-250 serves as the catalytic Charge relay system. An N-linked (GlcNAc...) asparagine glycan is attached at Asn-287. The Charge relay system role is filled by Asp-296. N-linked (GlcNAc...) asparagine glycosylation occurs at Asn-352. Intrachain disulfides connect Cys-370/Cys-384 and Cys-395/Cys-423. Catalysis depends on Ser-399, which acts as the Charge relay system.

Belongs to the peptidase S1 family. In terms of assembly, synthesized as a single chain precursor, which is cleaved into a light chain and a heavy chain held together by a disulfide bond. The enzyme is then activated by thrombin, which cleaves a tetradecapeptide from the amino end of the heavy chain; this reaction, which occurs at the surface of endothelial cells, is strongly promoted by thrombomodulin. The vitamin K-dependent, enzymatic carboxylation of some Glu residues allows the modified protein to bind calcium. In terms of processing, the iron and 2-oxoglutarate dependent 3-hydroxylation of aspartate and asparagine is (R) stereospecific within EGF domains. Plasma; synthesized in the liver.

The protein resides in the secreted. It is found in the golgi apparatus. The protein localises to the endoplasmic reticulum. It carries out the reaction Degradation of blood coagulation factors Va and VIIIa.. In terms of biological role, protein C is a vitamin K-dependent serine protease that regulates blood coagulation by inactivating factors Va and VIIIa in the presence of calcium ions and phospholipids. Exerts a protective effect on the endothelial cell barrier function. This is Vitamin K-dependent protein C (PROC) from Oryctolagus cuniculus (Rabbit).